The chain runs to 439 residues: tRNA modification GTPase MnmE (439 aa).

Arginine 20, glutamate 78, and lysine 116 together coordinate (6S)-5-formyl-5,6,7,8-tetrahydrofolate. In terms of domain architecture, TrmE-type G spans 211-364 (GIYVAILGEP…LLSAIQKKVE (154 aa)). GTP is bound by residues 221-226 (NSGKST), 240-246 (SEYAGTT), and 265-268 (DTAG). Mg(2+) is bound by residues serine 225 and threonine 246. Lysine 439 lines the (6S)-5-formyl-5,6,7,8-tetrahydrofolate pocket.

Belongs to the TRAFAC class TrmE-Era-EngA-EngB-Septin-like GTPase superfamily. TrmE GTPase family. As to quaternary structure, homodimer. Heterotetramer of two MnmE and two MnmG subunits. K(+) serves as cofactor.

Its subcellular location is the cytoplasm. In terms of biological role, exhibits a very high intrinsic GTPase hydrolysis rate. Involved in the addition of a carboxymethylaminomethyl (cmnm) group at the wobble position (U34) of certain tRNAs, forming tRNA-cmnm(5)s(2)U34. This Ehrlichia ruminantium (strain Gardel) protein is tRNA modification GTPase MnmE.